Here is a 61-residue protein sequence, read N- to C-terminus: Cobrotoxin-c (61 aa).

Intrachain disulfides connect Cys-3–Cys-23, Cys-17–Cys-40, Cys-42–Cys-53, and Cys-54–Cys-59.

Belongs to the three-finger toxin family. Short-chain subfamily. Type I alpha-neurotoxin sub-subfamily. In terms of tissue distribution, expressed by the venom gland.

It is found in the secreted. In terms of biological role, produces peripheral paralysis by blocking neuromuscular transmission at the postsynaptic site. Binds to the nicotinic acetylcholine receptor. The chain is Cobrotoxin-c from Naja kaouthia (Monocled cobra).